We begin with the raw amino-acid sequence, 151 residues long: UPF0208 membrane protein YfbV (151 aa).

The next 2 helical transmembrane spans lie at 46–65 (YAIR…QIAL) and 69–91 (LGPA…WWLG).

It belongs to the UPF0208 family.

It is found in the cell inner membrane. This is UPF0208 membrane protein YfbV from Shigella boydii serotype 18 (strain CDC 3083-94 / BS512).